We begin with the raw amino-acid sequence, 377 residues long: NADP-dependent oxidoreductase lnbE (377 aa).

Residues 170 to 173 (GGNG), 257 to 263 (LTNPRVS), and 293 to 295 (SPV) contribute to the NADP(+) site.

This sequence belongs to the NADP-dependent oxidoreductase L4BD family.

It functions in the pathway secondary metabolite biosynthesis. Its function is as follows. NADP-dependent oxidoreductase; part of the lnb gene cluster that mediates the biosynthesis of diastereomeric piperazines. Lna and lnb clusters encode sets of enzymes that produce overlapping sets of previously undescribed metabolites such as piperazinomycin-like metabolites or morpholine. The lna and lnb biosynthetic pathways appear to be part of a signaling network that controls the formation of sclerotia, a resilient overwintering structure. One primary function of the non-canonical nonribosomal peptide synthetases lnaA and lnbA consists in the reduction of L-tyrosine. The presence in the clusters of tailoring enzymes such as the oxidoreductases lnaB, lnbB, lnaE or lnbE, as well as of the cytochrome P450 monooxygenases lnaC, lnaD, or lnbC, might explain formation of various diastereomeric piperazines. In Aspergillus flavus (strain ATCC 200026 / FGSC A1120 / IAM 13836 / NRRL 3357 / JCM 12722 / SRRC 167), this protein is NADP-dependent oxidoreductase lnbE.